Here is a 260-residue protein sequence, read N- to C-terminus: 3'-5' ssDNA/RNA exonuclease TatD (260 aa).

A divalent metal cation is bound by residues E91, H127, and H152.

Belongs to the metallo-dependent hydrolases superfamily. TatD-type hydrolase family. TatD subfamily. As to quaternary structure, monomer. Mg(2+) is required as a cofactor. Mn(2+) serves as cofactor.

The protein resides in the cytoplasm. Functionally, 3'-5' exonuclease that prefers single-stranded DNA and RNA. May play a role in the H(2)O(2)-induced DNA damage repair. In Escherichia coli (strain K12), this protein is 3'-5' ssDNA/RNA exonuclease TatD.